We begin with the raw amino-acid sequence, 207 residues long: Uridine kinase (207 aa).

Residue 13–20 (GASGSGKT) coordinates ATP.

The protein belongs to the uridine kinase family.

The protein resides in the cytoplasm. The enzyme catalyses uridine + ATP = UMP + ADP + H(+). It carries out the reaction cytidine + ATP = CMP + ADP + H(+). Its pathway is pyrimidine metabolism; CTP biosynthesis via salvage pathway; CTP from cytidine: step 1/3. The protein operates within pyrimidine metabolism; UMP biosynthesis via salvage pathway; UMP from uridine: step 1/1. The sequence is that of Uridine kinase from Ureaplasma parvum serovar 3 (strain ATCC 27815 / 27 / NCTC 11736).